A 146-amino-acid polypeptide reads, in one-letter code: UPF0735 ACT domain-containing protein Cbei_1295 (146 aa).

Residues 70–145 (TYNIIFKNEK…NVEKVEFIGM (76 aa)) form the ACT domain.

Belongs to the UPF0735 family.

This Clostridium beijerinckii (strain ATCC 51743 / NCIMB 8052) (Clostridium acetobutylicum) protein is UPF0735 ACT domain-containing protein Cbei_1295.